The primary structure comprises 1077 residues: ATP-dependent helicase HRQ1 (1077 aa).

The Helicase ATP-binding domain maps to 299-483 (INSLHQGENV…DMFGINEVTL (185 aa)). 312 to 319 (TSTSSGKS) lines the ATP pocket. Residues 423–426 (DELH) carry the DEAH box motif. The Helicase C-terminal domain maps to 521 to 678 (ILVQLILNNV…DLVLDFNNIL (158 aa)).

Belongs to the helicase family. HRQ1 subfamily. Forms heptamer rings. Interacts with RAD4. It depends on Mg(2+) as a cofactor.

The protein localises to the nucleus. It carries out the reaction Couples ATP hydrolysis with the unwinding of duplex DNA by translocating in the 3'-5' direction.. The enzyme catalyses ATP + H2O = ADP + phosphate + H(+). In terms of biological role, helicase with 3'-5' helicase activity involved in genome stability. Functions in the RAD4-dependent nucleotide excision repair (NER) pathway and plays a critical role in DNA interstrand cross-link repair. Unwinds relatively long duplex DNA up to 120-bp and requires a long 3'-tail of at least 70 nucleotides for efficient unwinding of duplex DNA. Activity is significantly stimulated by a preexisting fork structure. Shows both processive helicase and DNA strand annealing activities. Affects telomere length by a non-catalytic mechanism, probably through inhibiting telomerase by competing with it for ssDNA binding. This chain is ATP-dependent helicase HRQ1, found in Saccharomyces cerevisiae (strain ATCC 204508 / S288c) (Baker's yeast).